Consider the following 1597-residue polypeptide: THO complex subunit 2 (1597 aa).

2 disordered regions span residues 1250–1274 (KSQRLQNDPPKSVASGSAGLNSKDR) and 1384–1597 (EPYP…RYQR). Polar residues predominate over residues 1419-1430 (GSSNYRGPSNDR). Basic and acidic residues-rich tracts occupy residues 1458–1490 (TYNDRSRALRPTGPDRGDGFDQRDNRLREEYKK), 1500–1512 (FPEKPFQEGKDSS), 1522–1545 (YKRDSPSENEEKPNKRFKKDETIR), and 1554–1567 (RNTRDSGAAHRANE). The segment covering 1568-1582 (NQRYNGNRKSNTQAL) has biased composition (polar residues).

The protein belongs to the THOC2 family. In terms of assembly, component of the THO complex, which is composed of HPR1, MFT1, THO2 and THP2. Together with SUB2, TEX1 and YRA1, THO forms the transcription/export (TREX) complex. THO associates with DNA and RNA in vitro.

Its subcellular location is the nucleus. In terms of biological role, component the THO subcomplex of the TREX complex, which operates in coupling transcription elongation to mRNA export. The THO complex is recruited to transcribed genes and moves along the gene with the elongating polymerase during transcription. THO is important for stabilizing nascent RNA in the RNA polymerase II elongation complex by preventing formation of DNA:RNA hybrids behind the elongating polymerase. It functions in cotranscriptional formation of an export-competent messenger ribonucleoprotein particle (mRNP) by facilitating the loading of ATP-dependent RNA helicase SUB2 and the mRNA export factor YRA1 along the nascent mRNA. This chain is THO complex subunit 2 (THO2), found in Saccharomyces cerevisiae (strain ATCC 204508 / S288c) (Baker's yeast).